Consider the following 205-residue polypeptide: Ribosomal RNA small subunit methyltransferase G (205 aa).

S-adenosyl-L-methionine-binding positions include G66, F71, I119–E120, and R135.

Belongs to the methyltransferase superfamily. RNA methyltransferase RsmG family.

Its subcellular location is the cytoplasm. The enzyme catalyses guanosine(527) in 16S rRNA + S-adenosyl-L-methionine = N(7)-methylguanosine(527) in 16S rRNA + S-adenosyl-L-homocysteine. Functionally, specifically methylates the N7 position of guanine in position 527 of 16S rRNA. In Rhizobium rhizogenes (strain K84 / ATCC BAA-868) (Agrobacterium radiobacter), this protein is Ribosomal RNA small subunit methyltransferase G.